Here is a 252-residue protein sequence, read N- to C-terminus: 5-oxoprolinase subunit A (252 aa).

This sequence belongs to the LamB/PxpA family. Forms a complex composed of PxpA, PxpB and PxpC.

It catalyses the reaction 5-oxo-L-proline + ATP + 2 H2O = L-glutamate + ADP + phosphate + H(+). Its function is as follows. Catalyzes the cleavage of 5-oxoproline to form L-glutamate coupled to the hydrolysis of ATP to ADP and inorganic phosphate. The chain is 5-oxoprolinase subunit A from Corynebacterium glutamicum (strain R).